We begin with the raw amino-acid sequence, 94 residues long: Protein RnfH (94 aa).

The protein belongs to the UPF0125 (RnfH) family.

This is Protein RnfH from Sodalis glossinidius (strain morsitans).